Consider the following 69-residue polypeptide: ATP synthase F(0) complex subunit e, mitochondrial (69 aa).

Lys34 is subject to N6-acetyllysine.

The protein belongs to the ATPase e subunit family. As to quaternary structure, component of the ATP synthase complex composed at least of ATP5F1A/subunit alpha, ATP5F1B/subunit beta, ATP5MC1/subunit c (homooctomer), MT-ATP6/subunit a, MT-ATP8/subunit 8, ATP5ME/subunit e, ATP5MF/subunit f, ATP5MG/subunit g, ATP5MK/subunit k, ATP5MJ/subunit j, ATP5F1C/subunit gamma, ATP5F1D/subunit delta, ATP5F1E/subunit epsilon, ATP5PF/subunit F6, ATP5PB/subunit b, ATP5PD/subunit d, ATP5PO/subunit OSCP. ATP synthase complex consists of a soluble F(1) head domain (subunits alpha(3) and beta(3)) - the catalytic core - and a membrane F(0) domain - the membrane proton channel (subunits c, a, 8, e, f, g, k and j). These two domains are linked by a central stalk (subunits gamma, delta, and epsilon) rotating inside the F1 region and a stationary peripheral stalk (subunits F6, b, d, and OSCP).

The protein resides in the mitochondrion. Its subcellular location is the mitochondrion inner membrane. Subunit e, of the mitochondrial membrane ATP synthase complex (F(1)F(0) ATP synthase or Complex V) that produces ATP from ADP in the presence of a proton gradient across the membrane which is generated by electron transport complexes of the respiratory chain. ATP synthase complex consist of a soluble F(1) head domain - the catalytic core - and a membrane F(1) domain - the membrane proton channel. These two domains are linked by a central stalk rotating inside the F(1) region and a stationary peripheral stalk. During catalysis, ATP synthesis in the catalytic domain of F(1) is coupled via a rotary mechanism of the central stalk subunits to proton translocation. In vivo, can only synthesize ATP although its ATP hydrolase activity can be activated artificially in vitro. Part of the complex F(0) domain. In Cricetulus longicaudatus (Long-tailed dwarf hamster), this protein is ATP synthase F(0) complex subunit e, mitochondrial.